The primary structure comprises 1177 residues: Topoisomerase 1-associated factor 1 (1177 aa).

Disordered stretches follow at residues 332–353, 576–598, 802–830, 893–1012, and 1028–1177; these read MDQTKKWNKPRRPGKKVDGEQE, KKVAETHGANGDEEGQVSDTEDI, ALAAAERPAGEEVAENTEEESPKPPSILV, DPPT…DKDM, and AFGK…SDSE. Over residues 586–597 the composition is skewed to acidic residues; sequence GDEEGQVSDTED. Basic and acidic residues predominate over residues 893–908; it reads DPPTYEDGKGPEDLIR. The segment covering 923 to 934 has biased composition (acidic residues); the sequence is FDDDDEEAENAV. Composition is skewed to basic and acidic residues over residues 935-955 and 975-1001; these read EEDHGEYRAGKATERKPDGER and KDRRAEARRKKELEKFAKQKSTEFVHD. Residues 1002–1011 are compositionally biased toward acidic residues; the sequence is SDEEDDDDKD. The segment covering 1054-1066 has biased composition (basic residues); sequence RTKRRKTPPKRKA. The span at 1071–1080 shows a compositional bias: acidic residues; the sequence is DSDDSDEDVQ. Over residues 1129–1140 the composition is skewed to polar residues; that stretch reads TTGATASITVKS. The segment covering 1145–1155 has biased composition (acidic residues); sequence MADDDDEEDEA.

This sequence belongs to the timeless family. In terms of assembly, component of the fork protection complex (FPC) consisting of TOF1 and CSM3.

It localises to the nucleus. Its function is as follows. Forms a fork protection complex (FPC) with CSM3 and which is required for chromosome segregation during meiosis and DNA damage repair. FPC coordinates leading and lagging strand synthesis and moves with the replication fork. FPC stabilizes replication forks in a configuration that is recognized by replication checkpoint sensors. This Phaeosphaeria nodorum (strain SN15 / ATCC MYA-4574 / FGSC 10173) (Glume blotch fungus) protein is Topoisomerase 1-associated factor 1 (TOF1).